A 305-amino-acid chain; its full sequence is Methionyl-tRNA formyltransferase (305 aa).

(6S)-5,6,7,8-tetrahydrofolate is bound at residue 108–111 (SLLP).

The protein belongs to the Fmt family.

The enzyme catalyses L-methionyl-tRNA(fMet) + (6R)-10-formyltetrahydrofolate = N-formyl-L-methionyl-tRNA(fMet) + (6S)-5,6,7,8-tetrahydrofolate + H(+). Attaches a formyl group to the free amino group of methionyl-tRNA(fMet). The formyl group appears to play a dual role in the initiator identity of N-formylmethionyl-tRNA by promoting its recognition by IF2 and preventing the misappropriation of this tRNA by the elongation apparatus. The polypeptide is Methionyl-tRNA formyltransferase (Clavibacter michiganensis subsp. michiganensis (strain NCPPB 382)).